The sequence spans 301 residues: Protoheme IX farnesyltransferase 1 (301 aa).

Helical transmembrane passes span 29 to 49 (VVAL…PHAV), 51 to 71 (VQPL…AAAL), 101 to 121 (ALIF…SLVN), 123 to 143 (LTAW…TAYL), 150 to 170 (NIVI…TAVT), 177 to 197 (ALLL…ALAI), 223 to 243 (CILL…LVGM), 244 to 264 (CGPV…YKAW), and 275 to 295 (AMQV…ALLL).

Belongs to the UbiA prenyltransferase family. Protoheme IX farnesyltransferase subfamily.

The protein localises to the cell inner membrane. It carries out the reaction heme b + (2E,6E)-farnesyl diphosphate + H2O = Fe(II)-heme o + diphosphate. Its pathway is porphyrin-containing compound metabolism; heme O biosynthesis; heme O from protoheme: step 1/1. In terms of biological role, converts heme B (protoheme IX) to heme O by substitution of the vinyl group on carbon 2 of heme B porphyrin ring with a hydroxyethyl farnesyl side group. The polypeptide is Protoheme IX farnesyltransferase 1 (Shewanella baltica (strain OS185)).